Here is a 549-residue protein sequence, read N- to C-terminus: Tegument protein (549 aa).

3 disordered regions span residues 50–92 (KKKA…TASP), 353–391 (ETGD…CSSY), and 523–542 (TPIK…TRSP). 2 stretches are compositionally biased toward polar residues: residues 75–84 (PQALSVPSLS) and 356–369 (DCSS…QTHR). Residues 523–534 (TPIKTTSSSSPR) are compositionally biased toward low complexity.

Functionally, this viral structural protein may have important functions, such as protein kinase activity, DNA binding, and possible transcriptional activation of immediate-early genes. This is Tegument protein from Homo sapiens (Human).